We begin with the raw amino-acid sequence, 236 residues long: ATP-dependent dethiobiotin synthetase BioD (236 aa).

Residue T19 coordinates Mg(2+). The active site involves K40. Residues D61 and E122 each coordinate Mg(2+). ATP contacts are provided by residues D61, 122–125 (EGVG), 182–183 (NT), and 211–213 (PRL).

The protein belongs to the dethiobiotin synthetase family. As to quaternary structure, homodimer. Mg(2+) is required as a cofactor.

The protein localises to the cytoplasm. It catalyses the reaction (7R,8S)-7,8-diammoniononanoate + CO2 + ATP = (4R,5S)-dethiobiotin + ADP + phosphate + 3 H(+). Its pathway is cofactor biosynthesis; biotin biosynthesis; biotin from 7,8-diaminononanoate: step 1/2. Functionally, catalyzes a mechanistically unusual reaction, the ATP-dependent insertion of CO2 between the N7 and N8 nitrogen atoms of 7,8-diaminopelargonic acid (DAPA, also called 7,8-diammoniononanoate) to form a ureido ring. The chain is ATP-dependent dethiobiotin synthetase BioD from Janthinobacterium sp. (strain Marseille) (Minibacterium massiliensis).